The following is a 304-amino-acid chain: UPF0282 protein TSIB_1029 (304 aa).

Belongs to the UPF0282 family.

This chain is UPF0282 protein TSIB_1029, found in Thermococcus sibiricus (strain DSM 12597 / MM 739).